The chain runs to 413 residues: MGFRIGKNLLFNLRKAPGSRVKARKTMVSVTMATSEWIQFFKEAGIPPGPAVNYAVMFVDNRIQKSMLLDLNKEIMNELGVTVVGDIIAILKHAKVVHRQDMCKAATESVPCNPSPLQGELRRGASSAASRMIANSLNHDSPPHTPTRRSDNSTSKISVTVSNKMAAKSAKAAALAHREEESLVVPTKRRRVTAEMEGKYIIHMPKGTTPRTRKILEQQQAAKGLHRTSVFDRLGAESKADTTTGTKPTGVFSRLGATPEMDEDLAWDSDNDSSSSSVLQYAGVLKKLGRGPTKASAQPALTVKAKAASSATSTATTPKLRRLALPSRPGLQKKPDSLPKVSILQRLGKAAVVSEAQDSQVTSTKSKSSAEVKFAIKRTLVGPRGSSSSESLGAQMDHAGTVSVFKRLGQRTF.

2 disordered regions span residues 108–158 (ESVP…SKIS) and 232–257 (DRLGAESKADTTTGTKPTGVFSRLGA). At S115 the chain carries Phosphoserine. Over residues 127–139 (SAASRMIANSLNH) the composition is skewed to polar residues. S141 carries the post-translational modification Phosphoserine. K239 is covalently cross-linked (Glycyl lysine isopeptide (Lys-Gly) (interchain with G-Cter in SUMO2)). Phosphoserine occurs at positions 269 and 296. Positions 290–336 (RGPTKASAQPALTVKAKAASSATSTATTPKLRRLALPSRPGLQKKPD) are disordered. Over residues 302-318 (TVKAKAASSATSTATTP) the composition is skewed to low complexity. A Phosphoserine modification is found at S342.

This is an uncharacterized protein from Mus musculus (Mouse).